We begin with the raw amino-acid sequence, 148 residues long: Large ribosomal subunit protein bL9 (148 aa).

It belongs to the bacterial ribosomal protein bL9 family.

Binds to the 23S rRNA. This Bacillus thuringiensis subsp. konkukian (strain 97-27) protein is Large ribosomal subunit protein bL9.